The following is a 486-amino-acid chain: Vesicular GABA transporter (486 aa).

Residues 1–93 (MASNRFQNLQ…EASEPISALQ (93 aa)) lie on the Cytoplasmic side of the membrane. Polar residues predominate over residues 29–46 (LNEVPSYQNQPQTGESGS). A disordered region spans residues 29–85 (LNEVPSYQNQPQTGESGSNPPPHDRLEPIQESVVSEQPQKDDINKQEEAKDDGHGEA). Residues 66–85 (PQKDDINKQEEAKDDGHGEA) show a composition bias toward basic and acidic residues. A helical transmembrane segment spans residues 94–114 (AAWNVTNAIQGMFIVGLPIAV). The Lumenal, vesicle segment spans residues 115-119 (KVGGW). The chain crosses the membrane as a helical span at residues 120–140 (WSIGAMVGVAYVCYWTGVLLI). Residues 141–167 (ECLYENGVKKRKTYREIADFYKPGFGK) lie on the Cytoplasmic side of the membrane. A helical membrane pass occupies residues 168–188 (WVLAAQLTELLSTCIIYLVLA). The Lumenal, vesicle segment spans residues 189–203 (ADLLQSCFPSVDKAG). A helical membrane pass occupies residues 204–224 (WMMITSASLLTCSFLDDLQIV). At 225 to 228 (SRLS) the chain is on the cytoplasmic side. Residues 229–249 (FFNAISHLIVNLIMVLYCLSF) form a helical membrane-spanning segment. The Lumenal, vesicle portion of the chain corresponds to 250–263 (VSQWSFSTITFSLN). The chain crosses the membrane as a helical span at residues 264–284 (INTLPTIVGMVVFGYTSHIFL). Residues 285 to 305 (PNLEGNMKNPAQFNVMLKWSH) are Cytoplasmic-facing. The chain crosses the membrane as a helical span at residues 306–326 (IAAAVFKVVFGMLGFLTFGEL). The Lumenal, vesicle portion of the chain corresponds to 327–341 (TQEEISNSLPNQSFK). The N-linked (GlcNAc...) asparagine glycan is linked to Asn-337. The chain crosses the membrane as a helical span at residues 342 to 362 (ILVNLILVVKALLSYPLPFYA). Residues 363 to 398 (AVQLLKNNLFLGYPQTPFTSCYSPDKSLREWAVTLR) are Cytoplasmic-facing. A helical transmembrane segment spans residues 399 to 419 (IILVLFTLFVALSVPYLVELM). The Lumenal, vesicle portion of the chain corresponds to 420 to 421 (GL). The helical transmembrane segment at 422-442 (VGNITGTMLSFIWPALFHLYI) threads the bilayer. Over 443-457 (KEKTLNNFEKRFDQG) the chain is Cytoplasmic. Residues 458-478 (IIIMGCSVCISGVYFSSMELL) traverse the membrane as a helical segment. Topologically, residues 479–486 (RAINSADS) are lumenal, vesicle.

Belongs to the amino acid/polyamine transporter 2 family.

It localises to the cytoplasmic vesicle membrane. In terms of biological role, involved in the uptake of GABA into the synaptic vesicles. This chain is Vesicular GABA transporter (unc-47), found in Caenorhabditis elegans.